Reading from the N-terminus, the 221-residue chain is MESSRWDKDPPGERRPQQSQHWRARDHGARGCGPRQPTATASPRPGLWITPAHGSHTPQTNTRRTQADNIFIYESWLIHHGTQMSSVLPQPPLVRGPWHNTNSPWDSWASRGKLRVCPCRTPRLHSSGCFSSKAGTALSPSLPVPGLRPQPPFLQKPLSILAPATPPALVSPTPPKLSPGQLSPHSVNVHWGPQGHLHLPRSGTTVLHAYLQTLSSPASHQ.

The span at 1–16 shows a compositional bias: basic and acidic residues; sequence MESSRWDKDPPGERRP. Residues 1-64 form a disordered region; it reads MESSRWDKDP…SHTPQTNTRR (64 aa).

This is an uncharacterized protein from Homo sapiens (Human).